The chain runs to 266 residues: Electron transfer flavoprotein subunit beta (266 aa).

Belongs to the ETF beta-subunit/FixA family. Heterodimer of an alpha and a beta subunit. It depends on FAD as a cofactor. Requires AMP as cofactor.

The electron transfer flavoprotein serves as a specific electron acceptor for other dehydrogenases. It transfers the electrons to the main respiratory chain via ETF-ubiquinone oxidoreductase (ETF dehydrogenase). The protein is Electron transfer flavoprotein subunit beta (etfB) of Mycobacterium leprae (strain TN).